The sequence spans 152 residues: Homeobox protein ceh-63 (152 aa).

Residues 21-30 (NDTNSSQQIK) show a composition bias toward polar residues. 2 disordered regions span residues 21 to 48 (NDTN…RTTF) and 92 to 126 (RRTK…SQHV). Basic residues predominate over residues 35–44 (PPKRSNRPTK). A DNA-binding region (homeobox) is located at residues 41-100 (RPTKRTTFTSEQVTLLELEFAKNEYICKDRRGELAQTIELTECQVKTWFQNRRTKKRRCT). Residues 116-126 (PSPQNPSSQHV) show a composition bias toward polar residues.

As to quaternary structure, may interact with homeobox protein ceh-14.

The protein resides in the nucleus. Probable transcription factor, modulating expression of helix-loop-helix protein mbr-1, perhaps acting in concert with homeobox protein ceh-14. May play a minor role in axon guidance in the DVC interneuron. This Caenorhabditis elegans protein is Homeobox protein ceh-63.